We begin with the raw amino-acid sequence, 172 residues long: Large ribosomal subunit protein uL10 (172 aa).

The protein belongs to the universal ribosomal protein uL10 family. Part of the ribosomal stalk of the 50S ribosomal subunit. The N-terminus interacts with L11 and the large rRNA to form the base of the stalk. The C-terminus forms an elongated spine to which L12 dimers bind in a sequential fashion forming a multimeric L10(L12)X complex.

In terms of biological role, forms part of the ribosomal stalk, playing a central role in the interaction of the ribosome with GTP-bound translation factors. The sequence is that of Large ribosomal subunit protein uL10 from Macrococcus caseolyticus (strain JCSC5402) (Macrococcoides caseolyticum).